The primary structure comprises 170 residues: Ergosterol biosynthetic protein 28 (170 aa).

A run of 3 helical transmembrane segments spans residues 7 to 27, 116 to 136, and 141 to 161; these read FLPEAKGVLPYYMIILSIISI, TLAYWTYIVAFSHFASELFVF, and FGLPQYFPFALASTSLIWMPL.

Belongs to the ERG28 family. As to quaternary structure, heterotetramer of ERG25, ERG26, ERG27 and ERG28. ERG28 acts as a scaffold to tether ERG27 and other 4,4-demethylation-related enzymes, forming a demethylation enzyme complex, in the endoplasmic reticulum.

The protein resides in the endoplasmic reticulum membrane. It participates in steroid metabolism; ergosterol biosynthesis. Sterol 24-C-methyltransferase; part of the third module of ergosterol biosynthesis pathway that includes the late steps of the pathway. ERG28 has a role as a scaffold to help anchor the catalytic components of the C-4 demethylation complex ERG25, ERG26 and ERG27 to the endoplasmic reticulum. The third module or late pathway involves the ergosterol synthesis itself through consecutive reactions that mainly occur in the endoplasmic reticulum (ER) membrane. Firstly, the squalene synthase ERG9 catalyzes the condensation of 2 farnesyl pyrophosphate moieties to form squalene, which is the precursor of all steroids. Squalene synthase is crucial for balancing the incorporation of farnesyl diphosphate (FPP) into sterol and nonsterol isoprene synthesis. Secondly, squalene is converted into lanosterol by the consecutive action of the squalene epoxidase ERG1 and the lanosterol synthase ERG7. Then, the delta(24)-sterol C-methyltransferase ERG6 methylates lanosterol at C-24 to produce eburicol. Eburicol is the substrate of the sterol 14-alpha demethylase encoded by CYP51A, CYP51B and CYP51C, to yield 4,4,24-trimethyl ergosta-8,14,24(28)-trienol. CYP51B encodes the enzyme primarily responsible for sterol 14-alpha-demethylation, and plays an essential role in ascospore formation. CYP51A encodes an additional sterol 14-alpha-demethylase, induced on ergosterol depletion and responsible for the intrinsic variation in azole sensitivity. The third CYP51 isoform, CYP51C, does not encode a sterol 14-alpha-demethylase, but is required for full virulence on host wheat ears. The C-14 reductase ERG24 then reduces the C14=C15 double bond which leads to 4,4-dimethylfecosterol. A sequence of further demethylations at C-4, involving the C-4 demethylation complex containing the C-4 methylsterol oxidases ERG25, the sterol-4-alpha-carboxylate 3-dehydrogenase ERG26 and the 3-keto-steroid reductase ERG27, leads to the production of fecosterol via 4-methylfecosterol. ERG28 has a role as a scaffold to help anchor ERG25, ERG26 and ERG27 to the endoplasmic reticulum. The C-8 sterol isomerase ERG2 then catalyzes the reaction which results in unsaturation at C-7 in the B ring of sterols and thus converts fecosterol to episterol. The sterol-C5-desaturases ERG3A and ERG3BB then catalyze the introduction of a C-5 double bond in the B ring to produce 5-dehydroepisterol. The C-22 sterol desaturases ERG5A and ERG5B further convert 5-dehydroepisterol into ergosta-5,7,22,24(28)-tetraen-3beta-ol by forming the C-22(23) double bond in the sterol side chain. Finally, ergosta-5,7,22,24(28)-tetraen-3beta-ol is substrate of the C-24(28) sterol reductase ERG4 to produce ergosterol. This chain is Ergosterol biosynthetic protein 28, found in Gibberella zeae (strain ATCC MYA-4620 / CBS 123657 / FGSC 9075 / NRRL 31084 / PH-1) (Wheat head blight fungus).